We begin with the raw amino-acid sequence, 712 residues long: WD repeat-containing protein 91 (712 aa).

The stretch at 148–180 (RRTNQVQEENEVLRQKLFALQAEIHRLKKEEQQ) forms a coiled coil. A Phosphoserine modification is found at S221. The span at 230 to 243 (LLPQSKKSPSRLSP) shows a compositional bias: low complexity. Residues 230 to 336 (LLPQSKKSPS…EAEPCPELHT (107 aa)) form a disordered region. Phosphoserine occurs at positions 253 and 258. Residues 297-308 (RLQDHGKERKEL) show a composition bias toward basic and acidic residues. 7 WD repeats span residues 371 to 410 (EHHS…QTKA), 413 to 453 (ISKS…NLCE), 480 to 520 (AAPS…QQLQ), 525 to 564 (PEPI…CAMS), 567 to 606 (AHYG…LKVS), 629 to 667 (VQVP…KVLE), and 674 to 712 (GHRA…AHKA).

This sequence belongs to the WD repeat WDR91 family. In terms of assembly, interacts with WDR81; involved in early to late endosome cargo transport. Interacts with BECN1; negatively regulates the PI3 kinase/PI3K activity associated with endosomal membranes.

It is found in the early endosome membrane. The protein localises to the late endosome membrane. Functionally, functions as a negative regulator of the PI3 kinase/PI3K activity associated with endosomal membranes via BECN1, a core subunit of the PI3K complex. By modifying the phosphatidylinositol 3-phosphate/PtdInsP3 content of endosomal membranes may regulate endosome fusion, recycling, sorting and early to late endosome transport. It is for instance, required for the delivery of cargos like BST2/tetherin from early to late endosome and thereby participates indirectly to their degradation by the lysosome. May play a role in meiosis. This chain is WD repeat-containing protein 91, found in Pongo abelii (Sumatran orangutan).